A 143-amino-acid polypeptide reads, in one-letter code: Large-conductance mechanosensitive channel (143 aa).

2 helical membrane-spanning segments follow: residues 19-39 (VGVI…GDLI) and 81-101 (GSFL…FGVI).

It belongs to the MscL family. As to quaternary structure, homopentamer.

It is found in the cell inner membrane. Functionally, channel that opens in response to stretch forces in the membrane lipid bilayer. May participate in the regulation of osmotic pressure changes within the cell. The polypeptide is Large-conductance mechanosensitive channel (Rhodopseudomonas palustris (strain BisB5)).